We begin with the raw amino-acid sequence, 102 residues long: Large ribosomal subunit protein bL21 (102 aa).

The protein belongs to the bacterial ribosomal protein bL21 family. In terms of assembly, part of the 50S ribosomal subunit. Contacts protein L20.

Its function is as follows. This protein binds to 23S rRNA in the presence of protein L20. This chain is Large ribosomal subunit protein bL21, found in Saccharopolyspora erythraea (strain ATCC 11635 / DSM 40517 / JCM 4748 / NBRC 13426 / NCIMB 8594 / NRRL 2338).